The chain runs to 1352 residues: Ubiquitin carboxyl-terminal hydrolase 31 (1352 aa).

A compositionally biased stretch (low complexity) spans 1-16; sequence MSKVTAPGSGPPAAAS. 2 disordered regions span residues 1-62 and 79-119; these read MSKV…RSVG and SSEG…PPAC. Over residues 32 to 43 the composition is skewed to gly residues; it reads RAGGGGAGGPGA. Over residues 44–62 the composition is skewed to low complexity; sequence SGPAAPSSPSSPSSARSVG. Pro residues predominate over residues 95-117; that stretch reads PPGPAAAPTPPPCPPPPASPAPP. Positions 128-765 constitute a USP domain; the sequence is AGLRNHGNTC…TAYILFYQRR (638 aa). Catalysis depends on cysteine 137, which acts as the Nucleophile. The disordered stretch occupies residues 162–185; that stretch reads RAGRPEPSPDPEQPAGRGAQGQGE. The active-site Proton acceptor is the histidine 723. Disordered stretches follow at residues 812-835, 919-939, and 951-1352; these read LASL…FSTR, SSSY…AVGR, and DESD…QKPQ. Residues 958–970 show a composition bias toward polar residues; that stretch reads LNSSVVDTQSKHS. Composition is skewed to low complexity over residues 992 to 1001, 1051 to 1070, 1078 to 1089, and 1101 to 1138; these read VDQSDSVDSS, SSLS…SLKP, DSSSRGSGRHSS, and PKSQ…GPAT. The span at 1148–1159 shows a compositional bias: basic and acidic residues; that stretch reads RTSDHSLSREGS. Positions 1160–1181 are enriched in polar residues; the sequence is RQSLGSDRASATSTSKPNSPRV. A compositionally biased stretch (low complexity) spans 1198 to 1210; sequence SSSMASLRSPSTS. Composition is skewed to basic and acidic residues over residues 1215 to 1225 and 1234 to 1243; these read LKRDSKSEDKG and RQKETRRSTD. Residues 1251–1264 show a composition bias toward low complexity; the sequence is SKKAGGSSVKSVCK. Position 1264 is an N6-acetyllysine (lysine 1264). Composition is skewed to polar residues over residues 1278-1290 and 1341-1352; these read PASQ…TTGK and MQTSARPSQKPQ.

It belongs to the peptidase C19 family. In terms of processing, acetylated at Lys-1264. Acetylation decreases activity. Deacetylated by SIRT1. As to expression, widely expressed.

The enzyme catalyses Thiol-dependent hydrolysis of ester, thioester, amide, peptide and isopeptide bonds formed by the C-terminal Gly of ubiquitin (a 76-residue protein attached to proteins as an intracellular targeting signal).. Functionally, deubiquitinase that recognizes and hydrolyzes the peptide bond at the C-terminal Gly of ubiquitin. May play a role in the regulation of NF-kappa-B signaling pathway by deubiquitinating TRAF2. Its function is as follows. (Microbial infection) Plays a positive role in foot-and-mouth disease and classical swine fever viral infection. Mechanistically, associates with internal ribosomal entry site (IRES) element within the 5'-untranslated region of viral genomes to promote translation of the virus-encoded polyprotein. The polypeptide is Ubiquitin carboxyl-terminal hydrolase 31 (USP31) (Homo sapiens (Human)).